Reading from the N-terminus, the 344-residue chain is MTDTLTIVRPDDWHLHLRDGDALADVVGDTARQFGRAIIMPNLKPPVTTTAQARAYRERILAALPAGTQFEPLMTLYLTDNTSPEVIREARASGFIHGVKLYPAGATTNSDAGVTDLRRCAKTLEAMQEVGMPLLVHGEVTDPTVDIFDREAVFIDTVMLPLRRDFPALKVVFEHITTKHAAEYVRDAEGPVGATITAHHLLYNRNALFVGGIRPHYYCLPVLKRETHRLALVAAATSGHPRFFLGTDSAPHAKGVKEHACGCAGCYTALHAMELYAEAFEDANALDKLEGFASLHGPDFYGLPRNAGTLTLTRSQWQLPAEVPFGEQTLVPLRGGEMLRWKSV.

2 residues coordinate Zn(2+): H14 and H16. Substrate contacts are provided by residues 16 to 18 (HLR) and N42. Residues K100, H137, and H175 each contribute to the Zn(2+) site. K100 is subject to N6-carboxylysine. H137 contributes to the substrate binding site. Substrate is bound at residue L220. D248 lines the Zn(2+) pocket. D248 is an active-site residue. Positions 252 and 264 each coordinate substrate.

It belongs to the metallo-dependent hydrolases superfamily. DHOase family. Class II DHOase subfamily. As to quaternary structure, homodimer. Zn(2+) serves as cofactor.

The catalysed reaction is (S)-dihydroorotate + H2O = N-carbamoyl-L-aspartate + H(+). The protein operates within pyrimidine metabolism; UMP biosynthesis via de novo pathway; (S)-dihydroorotate from bicarbonate: step 3/3. Functionally, catalyzes the reversible cyclization of carbamoyl aspartate to dihydroorotate. The polypeptide is Dihydroorotase (Ralstonia pickettii (strain 12J)).